Reading from the N-terminus, the 169-residue chain is Large ribosomal subunit protein uL10 (169 aa).

It belongs to the universal ribosomal protein uL10 family. In terms of assembly, part of the ribosomal stalk of the 50S ribosomal subunit. The N-terminus interacts with L11 and the large rRNA to form the base of the stalk. The C-terminus forms an elongated spine to which L12 dimers bind in a sequential fashion forming a multimeric L10(L12)X complex.

Functionally, forms part of the ribosomal stalk, playing a central role in the interaction of the ribosome with GTP-bound translation factors. The polypeptide is Large ribosomal subunit protein uL10 (Rickettsia massiliae (strain Mtu5)).